The primary structure comprises 433 residues: Xylose isomerase (433 aa).

Active-site residues include histidine 99 and aspartate 102. Residues glutamate 230, glutamate 266, histidine 269, aspartate 294, aspartate 305, aspartate 307, and aspartate 337 each contribute to the Mg(2+) site.

Belongs to the xylose isomerase family. Homotetramer. Requires Mg(2+) as cofactor.

Its subcellular location is the cytoplasm. It catalyses the reaction alpha-D-xylose = alpha-D-xylulofuranose. This Cereibacter sphaeroides (strain ATCC 17025 / ATH 2.4.3) (Rhodobacter sphaeroides) protein is Xylose isomerase.